A 520-amino-acid polypeptide reads, in one-letter code: Maturase K (520 aa).

Belongs to the intron maturase 2 family. MatK subfamily.

The protein resides in the plastid. It localises to the chloroplast. Its function is as follows. Usually encoded in the trnK tRNA gene intron. Probably assists in splicing its own and other chloroplast group II introns. The sequence is that of Maturase K from Linum perenne (Perennial flax).